Reading from the N-terminus, the 366-residue chain is tRNA 2-selenouridine synthase (366 aa).

The 124-residue stretch at 12–135 (FLNDVPMMDA…MRTFLLDTLH (124 aa)) folds into the Rhodanese domain. Catalysis depends on Cys95, which acts as the S-selanylcysteine intermediate.

Belongs to the SelU family. As to quaternary structure, monomer.

The catalysed reaction is 5-methylaminomethyl-2-thiouridine(34) in tRNA + selenophosphate + (2E)-geranyl diphosphate + H2O + H(+) = 5-methylaminomethyl-2-selenouridine(34) in tRNA + (2E)-thiogeraniol + phosphate + diphosphate. The enzyme catalyses 5-methylaminomethyl-2-thiouridine(34) in tRNA + (2E)-geranyl diphosphate = 5-methylaminomethyl-S-(2E)-geranyl-thiouridine(34) in tRNA + diphosphate. It carries out the reaction 5-methylaminomethyl-S-(2E)-geranyl-thiouridine(34) in tRNA + selenophosphate + H(+) = 5-methylaminomethyl-2-(Se-phospho)selenouridine(34) in tRNA + (2E)-thiogeraniol. It catalyses the reaction 5-methylaminomethyl-2-(Se-phospho)selenouridine(34) in tRNA + H2O = 5-methylaminomethyl-2-selenouridine(34) in tRNA + phosphate. Its function is as follows. Involved in the post-transcriptional modification of the uridine at the wobble position (U34) of tRNA(Lys), tRNA(Glu) and tRNA(Gln). Catalyzes the conversion of 2-thiouridine (S2U-RNA) to 2-selenouridine (Se2U-RNA). Acts in a two-step process involving geranylation of 2-thiouridine (S2U) to S-geranyl-2-thiouridine (geS2U) and subsequent selenation of the latter derivative to 2-selenouridine (Se2U) in the tRNA chain. This is tRNA 2-selenouridine synthase from Pseudomonas syringae pv. tomato (strain ATCC BAA-871 / DC3000).